A 430-amino-acid chain; its full sequence is MAFEFRLPDIGEGIHEGEIVKWFVKAGDTIEEDDVLAEVQNDKSVVEIPSPVSGTVEEVMVEEGTVAVVGDVIVKIDAPDAEDMQFKGHDDDSSSKEEPAKEEAPAEQAPVATQTEEVDENRTVKAMPSVRKYAREKGVNIKAVSGSGKNGRITKEDVDAYLNGGAPTASNESAASATSEEVAETPAAPAAVSLEGDFPETTEKIPAMRRAIAKAMVNSKHTAPHVTLMDEIDVQALWDHRKKFKEIAAEQGTKLTFLPYVVKALVSALKKYPALNTSFNEEAGEIVHKHYWNIGIAADTDRGLLVPVVKHADRKSIFQISDEINELAVKARDGKLTADEMKGATCTISNIGSAGGQWFTPVINHPEVAILGIGRIAQKPIVKDGEIVAAPVLALSLSFDHRQIDGATGQNAMNHIKRLLNNPELLLMEG.

The Lipoyl-binding domain maps to A2–D77. Position 43 is an N6-lipoyllysine (K43). The interval D80–R122 is disordered. The segment covering M84–A104 has biased composition (basic and acidic residues). The 38-residue stretch at K125–L162 folds into the Peripheral subunit-binding (PSBD) domain. The disordered stretch occupies residues G164–P199. The span at A166–S193 shows a compositional bias: low complexity. Residue H401 is part of the active site.

The protein belongs to the 2-oxoacid dehydrogenase family. As to quaternary structure, forms a 24-polypeptide structural core with octahedral symmetry. (R)-lipoate serves as cofactor.

It catalyses the reaction N(6)-[(R)-dihydrolipoyl]-L-lysyl-[protein] + acetyl-CoA = N(6)-[(R)-S(8)-acetyldihydrolipoyl]-L-lysyl-[protein] + CoA. The pyruvate dehydrogenase complex catalyzes the overall conversion of pyruvate to acetyl-CoA and CO(2). It contains multiple copies of three enzymatic components: pyruvate dehydrogenase (E1), dihydrolipoamide acetyltransferase (E2) and lipoamide dehydrogenase (E3). The sequence is that of Dihydrolipoyllysine-residue acetyltransferase component of pyruvate dehydrogenase complex (pdhC) from Staphylococcus aureus (strain Mu50 / ATCC 700699).